Reading from the N-terminus, the 237-residue chain is AA9 family lytic polysaccharide monooxygenase C (237 aa).

The signal sequence occupies residues 1–15 (MKVLAPLILAGAASA). Cu(2+) contacts are provided by H16 and H99. 2 cysteine pairs are disulfide-bonded: C54/C185 and C155/C237. N-linked (GlcNAc...) asparagine glycosylation is present at N112. Residues H171 and Q180 each contribute to the O2 site. Y182 contacts Cu(2+).

Belongs to the polysaccharide monooxygenase AA9 family. Cu(2+) is required as a cofactor.

It localises to the secreted. It catalyses the reaction [(1-&gt;4)-beta-D-glucosyl]n+m + reduced acceptor + O2 = 4-dehydro-beta-D-glucosyl-[(1-&gt;4)-beta-D-glucosyl]n-1 + [(1-&gt;4)-beta-D-glucosyl]m + acceptor + H2O.. Is able to utilize various natural phenolic compounds as reducing agents. Most of these reducing agents are present in plants, either free or as lignin building blocks, such as sinapic acid, or as flavonoids such as catechin and dopamine. Phenolic compounds with 1,2-benzenediol and 1,2,3-benzenetriol moieties yield the highest release of oxidized and non-oxidized glucooligosaccharides from cellulose compared to monophenols or sulfur-containing compounds. Its function is as follows. Lytic polysaccharide monooxygenase (LPMO) that depolymerizes crystalline and amorphous polysaccharides via the oxidation of scissile alpha- or beta-(1-4)-glycosidic bonds, yielding C4 oxidation products. Catalysis by LPMOs requires the reduction of the active-site copper from Cu(II) to Cu(I) by a reducing agent and H(2)O(2) or O(2) as a cosubstrate. Shows oxidative cleavage of beta-(1-3, 1-4)-glucan from oat spelt or xyloglucan from tamarind seed, in addition to cellulose. The chain is AA9 family lytic polysaccharide monooxygenase C from Thermothelomyces thermophilus (strain ATCC 42464 / BCRC 31852 / DSM 1799) (Sporotrichum thermophile).